Reading from the N-terminus, the 355-residue chain is Protein RecA (355 aa).

78 to 85 serves as a coordination point for ATP; sequence GPESSGKT.

It belongs to the RecA family.

Its subcellular location is the cytoplasm. Its function is as follows. Can catalyze the hydrolysis of ATP in the presence of single-stranded DNA, the ATP-dependent uptake of single-stranded DNA by duplex DNA, and the ATP-dependent hybridization of homologous single-stranded DNAs. It interacts with LexA causing its activation and leading to its autocatalytic cleavage. The protein is Protein RecA of Rhodobacter capsulatus (Rhodopseudomonas capsulata).